A 433-amino-acid chain; its full sequence is Metacaspase-1 (433 aa).

The interval Met-1 to Pro-123 is disordered. Residues Thr-9 to Gln-44 show a composition bias toward low complexity. Polar residues-rich tracts occupy residues Asn-45–His-55 and Gln-83–Gln-109. Active-site residues include His-222 and Cys-278.

This sequence belongs to the peptidase C14B family.

Involved in cell death (apoptosis). The polypeptide is Metacaspase-1 (MCA1) (Kluyveromyces lactis (strain ATCC 8585 / CBS 2359 / DSM 70799 / NBRC 1267 / NRRL Y-1140 / WM37) (Yeast)).